The primary structure comprises 687 residues: Glycine--tRNA ligase beta subunit (687 aa).

The protein belongs to the class-II aminoacyl-tRNA synthetase family. In terms of assembly, tetramer of two alpha and two beta subunits.

The protein resides in the cytoplasm. The catalysed reaction is tRNA(Gly) + glycine + ATP = glycyl-tRNA(Gly) + AMP + diphosphate. This is Glycine--tRNA ligase beta subunit from Trichlorobacter lovleyi (strain ATCC BAA-1151 / DSM 17278 / SZ) (Geobacter lovleyi).